The following is a 304-amino-acid chain: uncharacterized protein (304 aa).

NAD(+) contacts are provided by residues Gly136 to Ile137, Val215 to Arg217, and Asp241. Residue Arg217 is part of the active site. Glu246 is an active-site residue. His265 serves as the catalytic Proton donor. His265–Asn268 is a binding site for NAD(+).

It belongs to the D-isomer specific 2-hydroxyacid dehydrogenase family.

This is an uncharacterized protein from Corynebacterium melassecola.